The chain runs to 160 residues: Eukaryotic translation initiation factor 5A (160 aa).

A compositionally biased stretch (basic and acidic residues) spans 1 to 13; sequence MSDSEEHHFESKA. The segment at 1–22 is disordered; the sequence is MSDSEEHHFESKADAGASKTYP. The residue at position 53 (Lys53) is a Hypusine.

This sequence belongs to the eIF-5A family. In terms of processing, lys-53 undergoes hypusination, a unique post-translational modification that consists in the addition of a butylamino group from spermidine to lysine side chain, leading to the formation of the unusual amino acid hypusine. eIF-5As are the only known proteins to undergo this modification, which is essential for their function.

Functionally, translation factor that promotes translation elongation and termination, particularly upon ribosome stalling at specific amino acid sequence contexts. Binds between the exit (E) and peptidyl (P) site of the ribosome and promotes rescue of stalled ribosome: specifically required for efficient translation of polyproline-containing peptides as well as other motifs that stall the ribosome. Acts as a ribosome quality control (RQC) cofactor by joining the RQC complex to facilitate peptidyl transfer during CAT tailing step. The sequence is that of Eukaryotic translation initiation factor 5A (TIF5A) from Zea mays (Maize).